The following is a 294-amino-acid chain: Bidirectional sugar transporter SWEET13 (294 aa).

Residues 1 to 7 are Extracellular-facing; sequence MALTNNL. The chain crosses the membrane as a helical span at residues 8 to 28; it reads WAFVFGILGNIISFVVFLAPV. The region spanning 10–97 is the MtN3/slv 1 domain; sequence FVFGILGNII…VLFVSYANKK (88 aa). Topologically, residues 29–42 are cytoplasmic; the sequence is PTFVRICKKKSTEG. The chain crosses the membrane as a helical span at residues 43–63; the sequence is FQSLPYVSALFSAMLWIYYAM. Residues 64 to 69 lie on the Extracellular side of the membrane; sequence QKDGTA. Residues 70–90 traverse the membrane as a helical segment; that stretch reads FLLITINAFGCVIETIYIVLF. At 91 to 104 the chain is on the cytoplasmic side; the sequence is VSYANKKTRISTLK. Residues 105 to 125 traverse the membrane as a helical segment; that stretch reads VLGLLNFLGFAAIVLVCELLT. Residues 126–132 are Extracellular-facing; it reads KGSTREK. A helical membrane pass occupies residues 133-153; sequence VLGGICVGFSVSVFAAPLSIM. The 84-residue stretch at 133–216 folds into the MtN3/slv 2 domain; it reads VLGGICVGFS…MILYIIFKYY (84 aa). At 154-166 the chain is on the cytoplasmic side; sequence RVVVRTRSVEFMP. A helical transmembrane segment spans residues 167–187; it reads FSLSLFLTISAVTWLFYGLAI. At 188 to 192 the chain is on the extracellular side; it reads KDFYV. Residues 193-213 traverse the membrane as a helical segment; it reads ALPNVLGAFLGAVQMILYIIF. At 214–294 the chain is on the cytoplasmic side; it reads KYYKTPVAQK…NKDVQKQSQV (81 aa). The segment at 273 to 294 is disordered; the sequence is KSQNMTDPKDQINKDVQKQSQV. Positions 279 to 294 are enriched in basic and acidic residues; sequence DPKDQINKDVQKQSQV.

It belongs to the SWEET sugar transporter family. As to quaternary structure, forms heterooligomers with SWEET1, SWEET3, SWEET6, SWEET7, SWEET8, SWEET9, SWEET11 and SWEET17. As to expression, expressed at low levels in leaves.

The protein localises to the cell membrane. In terms of biological role, mediates both low-affinity uptake and efflux of sugar across the plasma membrane. Involved in nurturing the male gametophyte. The sequence is that of Bidirectional sugar transporter SWEET13 from Arabidopsis thaliana (Mouse-ear cress).